The chain runs to 766 residues: Transcription factor GTE4 (766 aa).

Disordered stretches follow at residues 87-108, 234-262, and 388-412; these read GTNS…PGDD, RDTT…PMEE, and GDKL…GDVG. Over residues 238-250 the composition is skewed to polar residues; the sequence is DAQQPAGLTSDSA. The 107-residue stretch at 416–522 folds into the Bromo domain; sequence GAGTKVFKNC…QIFEERWAVI (107 aa). 2 disordered regions span residues 544–606 and 687–766; these read TMRS…NKRD and ARAE…SDQT. Residues 574–589 are compositionally biased toward low complexity; the sequence is PTTTPGRTPTSATPSG. One can recognise an NET domain in the interval 597–678; that stretch reads PKANEPNKRD…NYKKGLSKKK (82 aa). A compositionally biased stretch (low complexity) spans 736–766; the sequence is SRSSSSSSSSSSSSSSDSDSDSSSSSGSDQT.

In terms of tissue distribution, ubiquitously expressed.

It localises to the nucleus. Involved in the activation and maintenance of cell division in the meristems and by this controls cell numbers in differentiated organs. Its action in cell cycle regulation may be directed through the RB-E2F pathway. The protein is Transcription factor GTE4 (GTE4) of Arabidopsis thaliana (Mouse-ear cress).